The following is a 318-amino-acid chain: Transaldolase (318 aa).

The active-site Schiff-base intermediate with substrate is K132.

The protein belongs to the transaldolase family. Type 1 subfamily. As to quaternary structure, homodimer.

Its subcellular location is the cytoplasm. The catalysed reaction is D-sedoheptulose 7-phosphate + D-glyceraldehyde 3-phosphate = D-erythrose 4-phosphate + beta-D-fructose 6-phosphate. The protein operates within carbohydrate degradation; pentose phosphate pathway; D-glyceraldehyde 3-phosphate and beta-D-fructose 6-phosphate from D-ribose 5-phosphate and D-xylulose 5-phosphate (non-oxidative stage): step 2/3. Transaldolase is important for the balance of metabolites in the pentose-phosphate pathway. The protein is Transaldolase of Shewanella sp. (strain MR-7).